We begin with the raw amino-acid sequence, 363 residues long: Holliday junction branch migration complex subunit RuvB (363 aa).

A disordered region spans residues 1–32 (MAIQTDSFAAAPAPSSGSTRRLISAAPTSPNE). The segment covering 7-18 (SFAAAPAPSSGS) has biased composition (low complexity). The tract at residues 13–200 (APSSGSTRRL…FGIVARLEFY (188 aa)) is large ATPase domain (RuvB-L). ATP is bound by residues L39, R40, G81, K84, T85, T86, 147–149 (EDY), R190, Y200, and R237. Mg(2+) is bound at residue T85. The interval 201-271 (TPEELVRIVT…IAELALTMLD (71 aa)) is small ATPAse domain (RuvB-S). The segment at 274–363 (PRGFDVMDRK…GPVGSDLFEG (90 aa)) is head domain (RuvB-H). Residues R329 and R334 each coordinate DNA.

This sequence belongs to the RuvB family. Homohexamer. Forms an RuvA(8)-RuvB(12)-Holliday junction (HJ) complex. HJ DNA is sandwiched between 2 RuvA tetramers; dsDNA enters through RuvA and exits via RuvB. An RuvB hexamer assembles on each DNA strand where it exits the tetramer. Each RuvB hexamer is contacted by two RuvA subunits (via domain III) on 2 adjacent RuvB subunits; this complex drives branch migration. In the full resolvosome a probable DNA-RuvA(4)-RuvB(12)-RuvC(2) complex forms which resolves the HJ.

The protein resides in the cytoplasm. It carries out the reaction ATP + H2O = ADP + phosphate + H(+). Its function is as follows. The RuvA-RuvB-RuvC complex processes Holliday junction (HJ) DNA during genetic recombination and DNA repair, while the RuvA-RuvB complex plays an important role in the rescue of blocked DNA replication forks via replication fork reversal (RFR). RuvA specifically binds to HJ cruciform DNA, conferring on it an open structure. The RuvB hexamer acts as an ATP-dependent pump, pulling dsDNA into and through the RuvAB complex. RuvB forms 2 homohexamers on either side of HJ DNA bound by 1 or 2 RuvA tetramers; 4 subunits per hexamer contact DNA at a time. Coordinated motions by a converter formed by DNA-disengaged RuvB subunits stimulates ATP hydrolysis and nucleotide exchange. Immobilization of the converter enables RuvB to convert the ATP-contained energy into a lever motion, pulling 2 nucleotides of DNA out of the RuvA tetramer per ATP hydrolyzed, thus driving DNA branch migration. The RuvB motors rotate together with the DNA substrate, which together with the progressing nucleotide cycle form the mechanistic basis for DNA recombination by continuous HJ branch migration. Branch migration allows RuvC to scan DNA until it finds its consensus sequence, where it cleaves and resolves cruciform DNA. This Leptothrix cholodnii (strain ATCC 51168 / LMG 8142 / SP-6) (Leptothrix discophora (strain SP-6)) protein is Holliday junction branch migration complex subunit RuvB.